A 250-amino-acid chain; its full sequence is Cysteine proteinase inhibitor 12 (250 aa).

A signal peptide spans 1 to 32 (MRVAATTRPASSSAAAPLPLFLLLAVAAAAAA). Cystatin domains lie at 49 to 137 (GGAH…RNTG) and 156 to 202 (PGWR…AEVV). The Secondary area of contact signature appears at 93 to 97 (QVVAG).

Belongs to the cystatin family. Phytocystatin subfamily.

It localises to the secreted. Functionally, specific inhibitor of cysteine proteinases. Probably involved in the regulation of endogenous processes and in defense against pests and pathogens. This Oryza sativa subsp. japonica (Rice) protein is Cysteine proteinase inhibitor 12.